We begin with the raw amino-acid sequence, 170 residues long: Adenine phosphoribosyltransferase (170 aa).

The protein belongs to the purine/pyrimidine phosphoribosyltransferase family. In terms of assembly, homodimer.

The protein resides in the cytoplasm. The catalysed reaction is AMP + diphosphate = 5-phospho-alpha-D-ribose 1-diphosphate + adenine. Its pathway is purine metabolism; AMP biosynthesis via salvage pathway; AMP from adenine: step 1/1. Its function is as follows. Catalyzes a salvage reaction resulting in the formation of AMP, that is energically less costly than de novo synthesis. The protein is Adenine phosphoribosyltransferase of Pseudothermotoga lettingae (strain ATCC BAA-301 / DSM 14385 / NBRC 107922 / TMO) (Thermotoga lettingae).